A 561-amino-acid polypeptide reads, in one-letter code: Ribulokinase (561 aa).

The protein belongs to the ribulokinase family.

The enzyme catalyses D-ribulose + ATP = D-ribulose 5-phosphate + ADP + H(+). The catalysed reaction is L-ribulose + ATP = L-ribulose 5-phosphate + ADP + H(+). The protein operates within carbohydrate degradation; L-arabinose degradation via L-ribulose; D-xylulose 5-phosphate from L-arabinose (bacterial route): step 2/3. The polypeptide is Ribulokinase (Shouchella clausii (strain KSM-K16) (Alkalihalobacillus clausii)).